Reading from the N-terminus, the 192-residue chain is MPRSAVVERRTKETEVKVELSLEPGEVNVDTPVKFLNHMVETLIFYMGASGRVKAIDLRGFDDHHVVEDVAIVLGSTLDKALGDRTGLARFGWAIIPMDDALTLASVDLGGRVYFMFKGSFTRETVGDMATEMVPHFIRSLASSLRATIHVNVMWGENNHHIAESVFKALGLAIGQAIQVKGGGVPSLKGVL.

It belongs to the imidazoleglycerol-phosphate dehydratase family.

The protein localises to the cytoplasm. The catalysed reaction is D-erythro-1-(imidazol-4-yl)glycerol 3-phosphate = 3-(imidazol-4-yl)-2-oxopropyl phosphate + H2O. The protein operates within amino-acid biosynthesis; L-histidine biosynthesis; L-histidine from 5-phospho-alpha-D-ribose 1-diphosphate: step 6/9. This chain is Imidazoleglycerol-phosphate dehydratase, found in Caldivirga maquilingensis (strain ATCC 700844 / DSM 13496 / JCM 10307 / IC-167).